The following is a 218-amino-acid chain: Ras-related protein Rab-11B (218 aa).

Position 2 is an N-acetylglycine (glycine 2). Arginine 4 bears the Citrulline mark. Serine 20, glycine 21, glycine 23, lysine 24, serine 25, asparagine 26, asparagine 37, leucine 38, serine 40, serine 42, and threonine 43 together coordinate GTP. Mg(2+) is bound at residue serine 25. The Switch 1 signature appears at phenylalanine 36–glutamate 47. Mg(2+)-binding residues include threonine 43 and aspartate 66. The short motif at threonine 67–glycine 86 is the Switch 2 element. Positions 69, 124, 125, 127, 155, and 156 each coordinate GTP. The segment at arginine 184 to leucine 218 is disordered. Residues cysteine 214 and cysteine 215 are each lipidated (S-geranylgeranyl cysteine). A Cysteine methyl ester modification is found at cysteine 215. Residues glutamine 216 to leucine 218 constitute a propeptide, removed in mature form.

This sequence belongs to the small GTPase superfamily. Rab family. In terms of assembly, interacts with KCNMA1. Interacts with RAB11FIP1, RAB11FIP2, RAB11FIP3 and RAB11FIP4. May interact with TBC1D14. Interacts with ATP6V1E1. Interacts with PI4KB. Interacts (GDP-bound form) with ZFYVE27. Interacts (GDP-bound form) with KIF5A in a ZFYVE27-dependent manner. Interacts with RELCH. Interacts (in GTP-bound form) with TBC1D8B (via domain Rab-GAP TBC). Forms a complex containing RAB11B, ASAP1, Rabin8/RAB3IP, RAP11FIP3 and ARF4. Interacts with WDR44. Requires Mg(2+) as cofactor. Post-translationally, citrullinated by PADI4. Abundantly expressed in brain, heart and testis. Also detected in kidney and pancreatic islets.

The protein localises to the recycling endosome membrane. Its subcellular location is the cytoplasmic vesicle. It is found in the secretory vesicle. The protein resides in the synaptic vesicle membrane. It localises to the phagosome membrane. It catalyses the reaction GTP + H2O = GDP + phosphate + H(+). Its activity is regulated as follows. Regulated by guanine nucleotide exchange factors (GEFs) which promote the exchange of bound GDP for free GTP. Regulated by GTPase activating proteins (GAPs) which increase the GTP hydrolysis activity. Inhibited by GDP dissociation inhibitors (GDIs) which prevent Rab-GDP dissociation. Functionally, the small GTPases Rab are key regulators of intracellular membrane trafficking, from the formation of transport vesicles to their fusion with membranes. Rabs cycle between an inactive GDP-bound form and an active GTP-bound form that is able to recruit to membranes different set of downstream effectors directly responsible for vesicle formation, movement, tethering and fusion. The small Rab GTPase RAB11B plays a role in endocytic recycling, regulating apical recycling of several transmembrane proteins including cystic fibrosis transmembrane conductance regulator/CFTR, epithelial sodium channel/ENaC, potassium voltage-gated channel, and voltage-dependent L-type calcium channel. May also regulate constitutive and regulated secretion, like insulin granule exocytosis. Required for melanosome transport and release from melanocytes. Also regulates V-ATPase intracellular transport in response to extracellular acidosis. Promotes Rabin8/RAB3IP preciliary vesicular trafficking to mother centriole by forming a ciliary targeting complex containing Rab11, ASAP1, Rabin8/RAB3IP, RAB11FIP3 and ARF4, thereby regulating ciliogenesis initiation. On the contrary, upon LPAR1 receptor signaling pathway activation, interaction with phosphorylated WDR44 prevents Rab11-RAB3IP-RAB11FIP3 complex formation and cilia growth. In Mus musculus (Mouse), this protein is Ras-related protein Rab-11B.